Consider the following 279-residue polypeptide: Very long chain fatty acid elongase 1 (279 aa).

Methionine 1 bears the N-acetylmethionine mark. Helical transmembrane passes span proline 23 to leucine 43, phenylalanine 61 to leucine 81, valine 110 to leucine 130, valine 137 to tryptophan 154, valine 176 to tryptophan 196, alanine 203 to proline 223, and isoleucine 231 to tryptophan 251. The short motif at lysine 275–asparagine 279 is the Di-lysine motif element.

This sequence belongs to the ELO family. ELOVL1 subfamily. Interacts with LASS2, TECR and HSD17B12. Interacts with TECR. As to expression, expressed in a broad variety of tissues. Highly expressed in stomach, lung, kidney, skin and intestine. Moderately expressed in white adipose tissue, liver, spleen, brain, brown adipose tissue, heart and muscle. Weakly expressed in testis.

The protein localises to the endoplasmic reticulum membrane. It catalyses the reaction a very-long-chain acyl-CoA + malonyl-CoA + H(+) = a very-long-chain 3-oxoacyl-CoA + CO2 + CoA. The catalysed reaction is eicosanoyl-CoA + malonyl-CoA + H(+) = 3-oxodocosanoyl-CoA + CO2 + CoA. The enzyme catalyses docosanoyl-CoA + malonyl-CoA + H(+) = 3-oxotetracosanoyl-CoA + CO2 + CoA. It carries out the reaction tetracosanoyl-CoA + malonyl-CoA + H(+) = 3-oxohexacosanoyl-CoA + CO2 + CoA. It catalyses the reaction (11Z)-eicosenoyl-CoA + malonyl-CoA + H(+) = 3-oxo-(13Z)-docosenoyl-CoA + CO2 + CoA. The catalysed reaction is (13Z)-docosenoyl-CoA + malonyl-CoA + H(+) = 3-oxo-(15Z)-tetracosenoyl-CoA + CO2 + CoA. The protein operates within lipid metabolism; fatty acid biosynthesis. Catalyzes the first and rate-limiting reaction of the four reactions that constitute the long-chain fatty acids elongation cycle. This endoplasmic reticulum-bound enzymatic process allows the addition of 2 carbons to the chain of long- and very long-chain fatty acids (VLCFAs) per cycle. Condensing enzyme that exhibits activity toward saturated and monounsaturated acyl-CoA substrates, with the highest activity towards C22:0 acyl-CoA. May participate in the production of both saturated and monounsaturated VLCFAs of different chain lengths that are involved in multiple biological processes as precursors of membrane lipids and lipid mediators. Important for saturated C24:0 and monounsaturated C24:1 sphingolipid synthesis. Indirectly inhibits RPE65 via production of VLCFAs. The sequence is that of Very long chain fatty acid elongase 1 from Mus musculus (Mouse).